The sequence spans 363 residues: MKIGVFVPIGNNGWLISTTAPQYMPTFELNKAIVQKAEHYHFDFALSMIKLRGFGGKTEFWDHNLESFTLMAGLAAVTSRIQIYATAATLTLPPAIVARMASTIDSISGGRFGVNLVTGWQKPEYDQMGLWPGDEYFSRRYEYLTEYVQVLRDLWGTGKSDFKGDYFTMNDCRVSPQPSAPMKVICAGQSDAGMAFSAKYADFNFCFGKGVNTPAAFAPTAARMKEAADKTGRDVGSYVLFMVIADETDEAARAKWERYKDGADDEALSWLTEQSQKDTRSGADTNVRQMADPTSAVNINMGTLVGSYASVARMLDEVAAVPGAEGVLLTFDDFLTGVETFGERIQPLMQCRAHIPAITKEVA.

Residues Ile-49–Lys-50, Asn-115, Glu-124, Arg-140–Tyr-141, and Ser-190 contribute to the FMN site.

The protein belongs to the NtaA/SnaA/DszA monooxygenase family. RutA subfamily.

It carries out the reaction uracil + FMNH2 + NADH + O2 = (Z)-3-ureidoacrylate + FMN + NAD(+) + H2O + H(+). The catalysed reaction is thymine + FMNH2 + NADH + O2 = (Z)-2-methylureidoacrylate + FMN + NAD(+) + H2O + H(+). Functionally, catalyzes the pyrimidine ring opening between N-3 and C-4 by an unusual flavin hydroperoxide-catalyzed mechanism, adding oxygen atoms in the process to yield ureidoacrylate peracid, that immediately reacts with FMN forming ureidoacrylate and FMN-N(5)-oxide. The FMN-N(5)-oxide reacts spontaneously with NADH to produce FMN. Requires the flavin reductase RutF to regenerate FMN in vivo. In Enterobacter cloacae subsp. cloacae (strain ATCC 13047 / DSM 30054 / NBRC 13535 / NCTC 10005 / WDCM 00083 / NCDC 279-56), this protein is Pyrimidine monooxygenase RutA.